Reading from the N-terminus, the 304-residue chain is UTP--glucose-1-phosphate uridylyltransferase 1 (304 aa).

Belongs to the UDPGP type 2 family.

The enzyme catalyses alpha-D-glucose 1-phosphate + UTP + H(+) = UDP-alpha-D-glucose + diphosphate. Its pathway is carbohydrate metabolism; nucleotide-sugar metabolism. This is UTP--glucose-1-phosphate uridylyltransferase 1 (hasC1) from Streptococcus pyogenes serotype M3 (strain ATCC BAA-595 / MGAS315).